Consider the following 420-residue polypeptide: MAKKTPGNNGKQKLFCSFCGKEQDAVKRLVAGPGVYICDECISLCNEIIAEDHEHSHEKSEVFSEVPSPADIKSILDQYVIGQDHAKKALSVAVYNHYKRVNLKEKKSDVEIEKSNILLIGPTGSGKTLLAQTLARIIKVPFAIVDATALTEAGYVGEDVENIILKLIQNADNDIKKAEVGIIYIDEVDKIARKSDSASITRDVSGEGVQQALLKIIEGTVANVPPQGGRKHPHQEYLQVDTKNILFILGGAFVDLPNIIKSRTGIKTIGFGSEEQRIQSENKDVLMEQVIPEDLIKFGLIPEFIGRLPIVATLQELNVDMLRQIFREPKNSVLKQYTRLLELENVKLTFHDEAIDKIAELAIKRESGARGLRAIVENIMLDLMFDIPSRKDIEEVIITAEVIANRVAPTLILKKESKIA.

In terms of domain architecture, ClpX-type ZB spans 4–57 (KTPGNNGKQKLFCSFCGKEQDAVKRLVAGPGVYICDECISLCNEIIAEDHEHSH). Positions 16, 19, 38, and 41 each coordinate Zn(2+). An ATP-binding site is contributed by 122-129 (PTGSGKTL).

Belongs to the ClpX chaperone family. In terms of assembly, component of the ClpX-ClpP complex. Forms a hexameric ring that, in the presence of ATP, binds to fourteen ClpP subunits assembled into a disk-like structure with a central cavity, resembling the structure of eukaryotic proteasomes.

Its function is as follows. ATP-dependent specificity component of the Clp protease. It directs the protease to specific substrates. Can perform chaperone functions in the absence of ClpP. The polypeptide is ATP-dependent Clp protease ATP-binding subunit ClpX (Leptospira interrogans serogroup Icterohaemorrhagiae serovar copenhageni (strain Fiocruz L1-130)).